A 388-amino-acid polypeptide reads, in one-letter code: Fibrinogen- and Ig-binding protein (388 aa).

Positions 1-41 (MSKTNPNKLYSLRKLKTGTASVAVDLTVLGTGLANTTDVKA) are cleaved as a signal peptide. D repeat units lie at residues 288–293 (EKLEAE), 294–299 (AKALKE), 302–307 (AKQAEE), and 309–314 (AKLKAD). Positions 308 to 362 (LAKLKADKASGAQKPDTKPGNKEVPTRPSQTRTNTNKAPMAQTKRQLPSTGEETT) are disordered. Basic and acidic residues predominate over residues 322-332 (PDTKPGNKEVP). Polar residues predominate over residues 334–362 (RPSQTRTNTNKAPMAQTKRQLPSTGEETT). The LPXTG sorting signal motif lies at 354–358 (LPSTG). Threonine 357 bears the Pentaglycyl murein peptidoglycan amidated threonine mark. Residues 358–388 (GEETTNPFFTAAALTVIASAGVLALKRKEEN) constitute a propeptide, removed by sortase.

The protein localises to the secreted. The protein resides in the cell wall. Functionally, binds IgG molecules of the Ig1, Ig2 and Ig4 subclasses, and also binds fibrinogen. This Streptococcus pyogenes protein is Fibrinogen- and Ig-binding protein (mrp4).